The sequence spans 554 residues: Glucose-6-phosphate isomerase (554 aa).

E359 acts as the Proton donor in catalysis. Catalysis depends on residues H390 and K518.

The protein belongs to the GPI family.

It localises to the cytoplasm. It catalyses the reaction alpha-D-glucose 6-phosphate = beta-D-fructose 6-phosphate. Its pathway is carbohydrate biosynthesis; gluconeogenesis. The protein operates within carbohydrate degradation; glycolysis; D-glyceraldehyde 3-phosphate and glycerone phosphate from D-glucose: step 2/4. Functionally, catalyzes the reversible isomerization of glucose-6-phosphate to fructose-6-phosphate. This is Glucose-6-phosphate isomerase from Pseudomonas aeruginosa (strain LESB58).